A 571-amino-acid polypeptide reads, in one-letter code: Glutamate--tRNA ligase (571 aa).

A 'HIGH' region motif is present at residues 38–48; that stretch reads PSPTGFMHIGG. The 'KMSKS' region motif lies at 316 to 320; the sequence is KLSKR. K319 provides a ligand contact to ATP.

This sequence belongs to the class-I aminoacyl-tRNA synthetase family. Glutamate--tRNA ligase type 1 subfamily. Monomer.

Its subcellular location is the cytoplasm. It carries out the reaction tRNA(Glu) + L-glutamate + ATP = L-glutamyl-tRNA(Glu) + AMP + diphosphate. Functionally, catalyzes the attachment of glutamate to tRNA(Glu) in a two-step reaction: glutamate is first activated by ATP to form Glu-AMP and then transferred to the acceptor end of tRNA(Glu). The sequence is that of Glutamate--tRNA ligase from Sorangium cellulosum (strain So ce56) (Polyangium cellulosum (strain So ce56)).